The chain runs to 501 residues: Trans-cinnamate 4-monooxygenase (501 aa).

Residues 3–23 (LVLLEKALLGLFAAAVLAVAV) traverse the membrane as a helical segment. (E)-cinnamate-binding positions include 213–218 (RSRLSQ) and alanine 302. Position 443 (cysteine 443) interacts with heme.

It belongs to the cytochrome P450 family. It depends on heme as a cofactor.

The protein resides in the membrane. The catalysed reaction is (E)-cinnamate + reduced [NADPH--hemoprotein reductase] + O2 = (E)-4-coumarate + oxidized [NADPH--hemoprotein reductase] + H2O + H(+). Its pathway is phenylpropanoid metabolism; trans-4-coumarate biosynthesis; trans-4-coumarate from trans-cinnamate: step 1/1. Its function is as follows. Catalyzes the first oxidative step of the phenylpropanoid pathway in higher plants by transforming trans-cinnamate into p-coumarate. The compounds formed by this pathway are essential components for lignification, pollination, and defense against ultraviolet light, predators and pathogens. Can also use 2-naphthoic acid as substrate. The protein is Trans-cinnamate 4-monooxygenase of Sorghum bicolor (Sorghum).